A 180-amino-acid polypeptide reads, in one-letter code: Large ribosomal subunit protein uL5 (180 aa).

It belongs to the universal ribosomal protein uL5 family. As to quaternary structure, part of the 50S ribosomal subunit; part of the 5S rRNA/L5/L18/L25 subcomplex. Contacts the 5S rRNA and the P site tRNA. Forms a bridge to the 30S subunit in the 70S ribosome.

This is one of the proteins that bind and probably mediate the attachment of the 5S RNA into the large ribosomal subunit, where it forms part of the central protuberance. In the 70S ribosome it contacts protein S13 of the 30S subunit (bridge B1b), connecting the 2 subunits; this bridge is implicated in subunit movement. Contacts the P site tRNA; the 5S rRNA and some of its associated proteins might help stabilize positioning of ribosome-bound tRNAs. This chain is Large ribosomal subunit protein uL5, found in Anaeromyxobacter dehalogenans (strain 2CP-1 / ATCC BAA-258).